The primary structure comprises 138 residues: Small ribosomal subunit protein uS11c (138 aa).

Residues 1 to 24 form a disordered region; the sequence is MTKPIPRIGSRRNGRIGSRKSGRR. Over residues 9–24 the composition is skewed to basic residues; it reads GSRRNGRIGSRKSGRR.

This sequence belongs to the universal ribosomal protein uS11 family. As to quaternary structure, part of the 30S ribosomal subunit.

It localises to the plastid. The protein resides in the chloroplast. The protein is Small ribosomal subunit protein uS11c of Liriodendron tulipifera (Tuliptree).